The primary structure comprises 262 residues: Transmembrane protein 270 (262 aa).

5 helical membrane passes run 6-26 (LVRSSLSGTLLVVVKLSALLI), 30-50 (AHLYNFLLLKIFLFNHWLLGL), 67-87 (PVGRVLWAGLTLLEVPVCLAL), 92-112 (LVWAGLLGCARALGLGPKWLG), and 127-147 (LFLSCLHSLMLAALLLLLLVW). Positions 226-262 (QEAEPQKALGLSSETPPPGPPAPGARPVLPEPGTPGE) are disordered. A compositionally biased stretch (pro residues) spans 240–262 (TPPPGPPAPGARPVLPEPGTPGE).

It is found in the membrane. This is Transmembrane protein 270 from Bos taurus (Bovine).